A 459-amino-acid chain; its full sequence is U1 small nuclear ribonucleoprotein 70 kDa (459 aa).

Residues 99–178 (KTIFVSRISY…RRIVVDIERG (80 aa)) enclose the RRM domain. A disordered region spans residues 185-459 (KPRKFGGGLG…YSMISNENGF (275 aa)). Residues 211 to 241 (EMSESREKEKEREKEKEKEKERMEKMKKRDG) show a composition bias toward basic and acidic residues. Over residues 242–254 (GLSSNGNRSNGIS) the composition is skewed to low complexity. The span at 263–408 (DRGDRGDRDR…IDERRRDQRD (146 aa)) shows a compositional bias: basic and acidic residues. The span at 426–440 (QHHHHQQNHQSHHNQ) shows a compositional bias: basic residues.

The protein localises to the nucleus. In terms of biological role, mediates the splicing of pre-mRNA by binding to the stem loop I region of U1-snRNA. The sequence is that of U1 small nuclear ribonucleoprotein 70 kDa (snrnp70) from Dictyostelium discoideum (Social amoeba).